The primary structure comprises 126 residues: Small ribosomal subunit protein uS13 (126 aa).

Residues 95 to 126 (GLPVRGQRTQTNARTRKGKKKTVAGKKKAGRK) are disordered. Positions 108-126 (RTRKGKKKTVAGKKKAGRK) are enriched in basic residues.

The protein belongs to the universal ribosomal protein uS13 family. Part of the 30S ribosomal subunit. Forms a loose heterodimer with protein S19. Forms two bridges to the 50S subunit in the 70S ribosome.

Its function is as follows. Located at the top of the head of the 30S subunit, it contacts several helices of the 16S rRNA. In the 70S ribosome it contacts the 23S rRNA (bridge B1a) and protein L5 of the 50S subunit (bridge B1b), connecting the 2 subunits; these bridges are implicated in subunit movement. Contacts the tRNAs in the A and P-sites. This is Small ribosomal subunit protein uS13 from Thermobifida fusca (strain YX).